We begin with the raw amino-acid sequence, 660 residues long: Peroxisomal acyl-coenzyme A oxidase 1 (660 aa).

Position 26 is a phosphoserine (serine 26). N6-succinyllysine occurs at positions 89 and 90. FAD contacts are provided by threonine 139 and glycine 178. At lysine 216 the chain carries N6-acetyllysine. Lysine 241 carries the post-translational modification N6-succinyllysine. N6-acetyllysine is present on residues lysine 255, lysine 267, and lysine 272. Lysine 349 carries the N6-succinyllysine modification. The Proton acceptor role is filled by glutamate 421. Residues lysine 437 and lysine 446 each carry the N6-acetyllysine; alternate modification. Lysine 437 and lysine 446 each carry N6-succinyllysine; alternate. Position 500 is an N6-acetyllysine (lysine 500). Lysine 512 bears the N6-acetyllysine; alternate mark. The residue at position 512 (lysine 512) is an N6-succinyllysine; alternate. Lysine 542 is subject to N6-succinyllysine. At lysine 637 the chain carries N6-acetyllysine; alternate. An N6-succinyllysine; alternate modification is found at lysine 637. Lysine 643 carries the N6-succinyllysine modification. Serine 649 is modified (phosphoserine). At lysine 651 the chain carries N6-acetyllysine. Lysine 654 is subject to N6-succinyllysine. The Microbody targeting signal signature appears at 658-660 (SKL).

The protein belongs to the acyl-CoA oxidase family. In terms of assembly, homodimer. Interacts with LONP2. It depends on FAD as a cofactor.

It is found in the peroxisome. The catalysed reaction is a 2,3-saturated acyl-CoA + O2 = a (2E)-enoyl-CoA + H2O2. It catalyses the reaction hexadecanoyl-CoA + O2 = (2E)-hexadecenoyl-CoA + H2O2. The enzyme catalyses dodecanoyl-CoA + O2 = (2E)-dodecenoyl-CoA + H2O2. It carries out the reaction octanoyl-CoA + O2 = (2E)-octenoyl-CoA + H2O2. The catalysed reaction is decanoyl-CoA + O2 = (2E)-decenoyl-CoA + H2O2. It catalyses the reaction tetradecanoyl-CoA + O2 = (2E)-tetradecenoyl-CoA + H2O2. The enzyme catalyses hexadecanedioyl-CoA + O2 = (2E)-hexadecenedioyl-CoA + H2O2. It carries out the reaction tetracosanoyl-CoA + O2 = (2E)-tetracosenoyl-CoA + H2O2. The catalysed reaction is glutaryl-CoA + O2 = (2E)-glutaconyl-CoA + H2O2. It catalyses the reaction hexanoyl-CoA + O2 = (2E)-hexenoyl-CoA + H2O2. The enzyme catalyses octadecanoyl-CoA + O2 = (2E)-octadecenoyl-CoA + H2O2. It carries out the reaction (5Z,8Z,11Z,14Z,17Z)-eicosapentaenoyl-CoA + O2 = (2E,5Z,8Z,11Z,14Z,17Z)-icosahexaenoyl-CoA + H2O2. The catalysed reaction is (6Z,9Z,12Z,15Z,18Z,21Z)-tetracosahexaenoyl-CoA + O2 = (2E,6Z,9Z,12Z,15Z,18Z,21Z)-tetracosaheptaenoyl-CoA + H2O2. It functions in the pathway lipid metabolism; peroxisomal fatty acid beta-oxidation. Its function is as follows. Involved in the initial and rate-limiting step of peroxisomal beta-oxidation of straight-chain saturated and unsaturated very-long-chain fatty acids. Catalyzes the desaturation of fatty acyl-CoAs such as palmitoyl-CoA (hexadecanoyl-CoA) to 2-trans-enoyl-CoAs ((2E)-enoyl-CoAs) such as (2E)-hexadecenoyl-CoA, and donates electrons directly to molecular oxygen (O(2)), thereby producing hydrogen peroxide (H(2)O(2)). In terms of biological role, shows highest activity against medium-chain fatty acyl-CoAs. Shows optimum activity with a chain length of 10 carbons (decanoyl-CoA) in vitro. Is active against a much broader range of substrates and shows activity towards long-chain acyl-CoAs. This Pongo abelii (Sumatran orangutan) protein is Peroxisomal acyl-coenzyme A oxidase 1.